We begin with the raw amino-acid sequence, 335 residues long: MTEPKDIVLKESEEIEGTPIEGPWLDEVRILEEVIDYYHRIGFQATHLGRAIEIWKKVEEKRASGEEVRVFLGYTSNIVSSGLRELIAWLVKEGKVDVIVTTAGGVEEDFIKALKPFILGDWYVNDAEMREKGINRIGNIFVPNDRYIEFEKYMIPFFERVLEMEKERGKPLTASEFIYEMGRFMDEKLGKEKERSIIYWAYKRNVPIFCPAITDGSIGDMLYFFKEERGDRELIIDVANDIVKLNNLAVTAKETASIILGGSLPKHAIINANLFRGGTDYAIYVTTAIPWDGSLSGAPPSEGVSWGKIRAKADYVEIWADATLVFPVLVWKVMR.

Catalysis depends on lysine 308, which acts as the Nucleophile.

The protein belongs to the deoxyhypusine synthase family. The cofactor is NAD(+).

It carries out the reaction [eIF5A protein]-L-lysine + spermidine = [eIF5A protein]-deoxyhypusine + propane-1,3-diamine. Its pathway is protein modification; eIF5A hypusination. Its function is as follows. Catalyzes the NAD-dependent oxidative cleavage of spermidine and the subsequent transfer of the butylamine moiety of spermidine to the epsilon-amino group of a specific lysine residue of the eIF-5A precursor protein to form the intermediate deoxyhypusine residue. The polypeptide is Probable deoxyhypusine synthase (Thermococcus onnurineus (strain NA1)).